A 572-amino-acid chain; its full sequence is Oxygen-dependent choline dehydrogenase (572 aa).

An FAD-binding site is contributed by 7 to 36 (DYIIIGAGSAGNVLATRLTEDRDVTVLLLE). The active-site Proton acceptor is the H474.

The protein belongs to the GMC oxidoreductase family. It depends on FAD as a cofactor.

The enzyme catalyses choline + A = betaine aldehyde + AH2. It carries out the reaction betaine aldehyde + NAD(+) + H2O = glycine betaine + NADH + 2 H(+). It participates in amine and polyamine biosynthesis; betaine biosynthesis via choline pathway; betaine aldehyde from choline (cytochrome c reductase route): step 1/1. Functionally, involved in the biosynthesis of the osmoprotectant glycine betaine. Catalyzes the oxidation of choline to betaine aldehyde and betaine aldehyde to glycine betaine at the same rate. The chain is Oxygen-dependent choline dehydrogenase from Paraburkholderia phymatum (strain DSM 17167 / CIP 108236 / LMG 21445 / STM815) (Burkholderia phymatum).